The primary structure comprises 64 residues: Large ribosomal subunit protein bL28 (64 aa).

This sequence belongs to the bacterial ribosomal protein bL28 family.

This is Large ribosomal subunit protein bL28 from Bifidobacterium adolescentis (strain ATCC 15703 / DSM 20083 / NCTC 11814 / E194a).